Reading from the N-terminus, the 677-residue chain is Mitochondrial 15S rRNA processing factor ppr3 (677 aa).

Residues Met-1 to Leu-43 constitute a mitochondrion transit peptide. PPR repeat units follow at residues Ser-210–Pro-244, Asp-245–Ala-279, Asn-280–Ser-314, Asp-317–Pro-351, Ser-355–Pro-390, and Asp-569–Pro-604.

This sequence belongs to the CCM1 family. In terms of assembly, binds to mitochondrial small subunit 15S rRNA.

It localises to the mitochondrion. Functionally, regulates mitochondrial small subunit maturation by controlling 15S rRNA 5'-end processing. Localizes to the 5' precursor of the 15S rRNA in a position that is subsequently occupied by mS47 in the mature yeast mtSSU. Uses structure and sequence-specific RNA recognition, binding to a single-stranded region of the precursor and specifically recognizing bases -6 to -1. The exchange of Ccm1 for mS47 is coupled to the irreversible removal of precursor rRNA that is accompanied by conformational changes of the mitoribosomal proteins uS5m and mS26. These conformational changes signal completion of 5'-end rRNA processing through protection of the mature 5'-end of the 15S rRNA and stabilization of mS47. The removal of the 5' precursor together with the dissociation of Ccm1 may be catalyzed by the 5'-3' exoribonuclease Pet127. Involved in the specific removal of group I introns in mitochondrial encoded transcripts. This Schizosaccharomyces japonicus (strain yFS275 / FY16936) (Fission yeast) protein is Mitochondrial 15S rRNA processing factor ppr3 (dmr1).